Consider the following 453-residue polypeptide: Ribulose bisphosphate carboxylase large chain (453 aa).

The propeptide occupies 1–2 (MS). Position 3 is an N-acetylproline (P3). K14 bears the N6,N6,N6-trimethyllysine mark. Residues N123 and T173 each contribute to the substrate site. The Proton acceptor role is filled by K175. K177 contacts substrate. Residues K201, D203, and E204 each coordinate Mg(2+). K201 is modified (N6-carboxylysine). H294 functions as the Proton acceptor in the catalytic mechanism. R295, H327, and S379 together coordinate substrate.

Belongs to the RuBisCO large chain family. Type I subfamily. As to quaternary structure, heterohexadecamer of 8 large chains and 8 small chains; disulfide-linked. The disulfide link is formed within the large subunit homodimers. It depends on Mg(2+) as a cofactor. The disulfide bond which can form in the large chain dimeric partners within the hexadecamer appears to be associated with oxidative stress and protein turnover.

It localises to the plastid. It is found in the chloroplast. The enzyme catalyses 2 (2R)-3-phosphoglycerate + 2 H(+) = D-ribulose 1,5-bisphosphate + CO2 + H2O. It carries out the reaction D-ribulose 1,5-bisphosphate + O2 = 2-phosphoglycolate + (2R)-3-phosphoglycerate + 2 H(+). Functionally, ruBisCO catalyzes two reactions: the carboxylation of D-ribulose 1,5-bisphosphate, the primary event in carbon dioxide fixation, as well as the oxidative fragmentation of the pentose substrate in the photorespiration process. Both reactions occur simultaneously and in competition at the same active site. This is Ribulose bisphosphate carboxylase large chain from Rubia tinctorum (Madder).